A 393-amino-acid polypeptide reads, in one-letter code: Formate-dependent phosphoribosylglycinamide formyltransferase (393 aa).

N(1)-(5-phospho-beta-D-ribosyl)glycinamide contacts are provided by residues 22 to 23 (EL) and Glu82. ATP contacts are provided by residues Arg114, Lys155, 160–165 (SSGKGQ), 195–198 (EGFI), and Glu203. Positions 119–308 (RLAAEELDLP…QFALHARAIL (190 aa)) constitute an ATP-grasp domain. Residues Glu267 and Glu279 each contribute to the Mg(2+) site. N(1)-(5-phospho-beta-D-ribosyl)glycinamide-binding positions include Asp286, Lys356, and 363 to 364 (RR).

This sequence belongs to the PurK/PurT family. Homodimer.

The catalysed reaction is N(1)-(5-phospho-beta-D-ribosyl)glycinamide + formate + ATP = N(2)-formyl-N(1)-(5-phospho-beta-D-ribosyl)glycinamide + ADP + phosphate + H(+). The protein operates within purine metabolism; IMP biosynthesis via de novo pathway; N(2)-formyl-N(1)-(5-phospho-D-ribosyl)glycinamide from N(1)-(5-phospho-D-ribosyl)glycinamide (formate route): step 1/1. Involved in the de novo purine biosynthesis. Catalyzes the transfer of formate to 5-phospho-ribosyl-glycinamide (GAR), producing 5-phospho-ribosyl-N-formylglycinamide (FGAR). Formate is provided by PurU via hydrolysis of 10-formyl-tetrahydrofolate. The chain is Formate-dependent phosphoribosylglycinamide formyltransferase from Pseudomonas fluorescens (strain Pf0-1).